We begin with the raw amino-acid sequence, 295 residues long: MEVRRRPPNPAVHVASLTYQVKVPGSSPSNILEEIVWYKEREVNAWREQLPLQQLQNQVRGLTQTPRDFLAALRQAPTRPAVIAEVKKASPSKGVLREDFDPVAIAQAYAANGAACISVLTDEKFFQGGFENLQRVRAAVDVPLLCKDFVIYPYQIYKARLLGADAVLLIAAILSDADLRYFLKIAHSLGLNALVEVHSLPELERVLALDDLRLVGINNRNLKTFVTDLAVTEHLAAQCRDRDLLLVSESGLFTGADLDRVTQAGAQAVLIGESLVKQPDPGLALQQLVGDRPSA.

This sequence belongs to the TrpC family.

The enzyme catalyses 1-(2-carboxyphenylamino)-1-deoxy-D-ribulose 5-phosphate + H(+) = (1S,2R)-1-C-(indol-3-yl)glycerol 3-phosphate + CO2 + H2O. Its pathway is amino-acid biosynthesis; L-tryptophan biosynthesis; L-tryptophan from chorismate: step 4/5. This Synechococcus sp. (strain ATCC 27144 / PCC 6301 / SAUG 1402/1) (Anacystis nidulans) protein is Indole-3-glycerol phosphate synthase.